A 115-amino-acid polypeptide reads, in one-letter code: Guanylin (115 aa).

The signal sequence occupies residues 1 to 21 (MNACVLSVLCLLGAVAVLVEG). A propeptide spanning residues 22–100 (VTVQDGDLSF…LQRLEAIAQD (79 aa)) is cleaved from the precursor. 3 cysteine pairs are disulfide-bonded: cysteine 69–cysteine 82, cysteine 104–cysteine 112, and cysteine 107–cysteine 115.

The protein belongs to the guanylin family.

The protein localises to the secreted. In terms of biological role, endogenous activator of intestinal guanylate cyclase. It stimulates this enzyme through the same receptor binding region as the heat-stable enterotoxins. The polypeptide is Guanylin (GUCA2A) (Notomys alexis (Spinifex hopping mouse)).